We begin with the raw amino-acid sequence, 417 residues long: RH-like protein IIF (417 aa).

11 helical membrane-spanning segments follow: residues Cys12–Thr32, Leu44–Phe64, Val77–Phe97, Ile125–Val145, Phe172–Pro192, Thr203–Phe223, Val238–Leu258, Ile265–Cys285, Leu287–Gly307, Asn331–Thr351, and Met358–Leu378.

This sequence belongs to the ammonium transporter (TC 2.A.49) family. Rh subfamily.

It is found in the membrane. Functionally, may be part of an oligomeric complex which is likely to have a transport or channel function in the erythrocyte membrane. The protein is RH-like protein IIF of Pan troglodytes (Chimpanzee).